The chain runs to 506 residues: Acyl-CoA-binding domain-containing protein 5 (506 aa).

The ACB domain maps to 44 to 133; sequence YETRFEAAVK…MKKIIETMPM (90 aa). An acyl-CoA contacts are provided by residues 55 to 64, 75 to 79, Lys-101, and Tyr-120; these read IQSLPKNGSF and YSFYK. Residues 175–217 are disordered; the sequence is AKAVNGKAESSDSGAESEEEEAQEELKGAEQSGSDDKKMMTKS. Residues 181–209 are a coiled coil; the sequence is KAESSDSGAESEEEEAQEELKGAEQSGSD. 6 positions are modified to phosphoserine: Ser-184, Ser-185, Ser-187, Ser-191, Ser-206, and Ser-233. Residues 198 to 217 are compositionally biased toward basic and acidic residues; it reads EELKGAEQSGSDDKKMMTKS. Disordered stretches follow at residues 234 to 302 and 345 to 417; these read FAQD…CDSM and AVKG…RGSR. Basic and acidic residues predominate over residues 238–257; it reads SDIHTDSSRSARRSEDKKPT. Over residues 258–267 the composition is skewed to polar residues; the sequence is DQSSQQTGNT. Phosphoserine is present on Ser-301. Basic and acidic residues predominate over residues 348-360; sequence GKGEVKHGGEDGR. Residue Ser-403 is modified to Phosphoserine. Residues 406 to 416 show a composition bias toward basic and acidic residues; that stretch reads DGERWGSDRGS. Positions 426-451 form a coiled coil; that stretch reads LVLIRLQEDMQNVLQRLHKLETLTAS. At Lys-444 the chain carries N6-acetyllysine. A helical membrane pass occupies residues 478-498; the sequence is GALAFAIIWPFIAQWLVHLYY.

It belongs to the ATG37 family.

The protein resides in the peroxisome membrane. Acyl-CoA binding protein which acts as the peroxisome receptor for pexophagy but is dispensable for aggrephagy and nonselective autophagy. Binds medium- and long-chain acyl-CoA esters. The polypeptide is Acyl-CoA-binding domain-containing protein 5 (Acbd5) (Rattus norvegicus (Rat)).